The primary structure comprises 305 residues: Alpha-N-acetylgalactosaminide alpha-2,6-sialyltransferase 3 (305 aa).

Residues 1–8 (MACILKRK) are Cytoplasmic-facing. A helical; Signal-anchor for type II membrane protein membrane pass occupies residues 9 to 29 (PALAVSFIALCILLLAMRLAN). Residues 30–305 (DVTFPLLLNC…VFTHPNWTVS (276 aa)) are Lumenal-facing. C80 and C229 form a disulfide bridge. Residues N239 and N301 are each glycosylated (N-linked (GlcNAc...) asparagine).

The protein belongs to the glycosyltransferase 29 family. In adults it is highly expressed in spleen, followed by kidney and lesser in lung. Not found in liver and skeletal muscle. In newborns it is abundantly expressed in brain and kidney.

It localises to the golgi apparatus membrane. The catalysed reaction is an alpha-Neu5Ac-(2-&gt;3)-beta-D-Gal-(1-&gt;3)-D-GlcNAc derivative + CMP-N-acetyl-beta-neuraminate = an alpha-Neu5Ac-(2-&gt;3)-beta-D-Gal-(1-&gt;3)-[alpha-Neu5Ac-(2-&gt;6)]-D-GlcNAc derivative + CMP + H(+). The enzyme catalyses a ganglioside GM1b + CMP-N-acetyl-beta-neuraminate = a ganglioside GD1alpha + CMP + H(+). It catalyses the reaction a ganglioside GM1b (d18:1(4E)) + CMP-N-acetyl-beta-neuraminate = a ganglioside GD1alpha (d18:1(4E)) + CMP + H(+). It carries out the reaction a globoside MSGG + CMP-N-acetyl-beta-neuraminate = a globoside DSGG + CMP + H(+). The catalysed reaction is 3-O-[alpha-Neu5Ac-(2-&gt;3)-beta-D-Gal-(1-&gt;3)-alpha-D-GalNAc]-L-Ser-[protein] + CMP-N-acetyl-beta-neuraminate = a 3-O-{alpha-Neu5Ac-(2-&gt;3)-beta-D-Gal-(1-&gt;3)-[alpha-Neu5Ac-(2-&gt;6)]-alpha-D-GalNAc}-L-seryl-[protein] + CMP + H(+). The enzyme catalyses 3-O-[alpha-Neu5Ac-(2-&gt;3)-beta-D-Gal-(1-&gt;3)-alpha-D-GalNAc]-L-Thr-[protein] + CMP-N-acetyl-beta-neuraminate = a 3-O-{alpha-Neu5Ac-(2-&gt;3)-beta-D-Gal-(1-&gt;3)-[alpha-Neu5Ac-(2-&gt;6)]-alpha-D-GalNAc}-L-threonyl-[protein] + CMP + H(+). The protein operates within protein modification; protein glycosylation. It participates in glycolipid biosynthesis. Transfers the sialyl group (N-acetyl-alpha-neuraminyl or NeuAc) from CMP-NeuAc to the GalNAc residue on the NeuAc-alpha-2,3-Gal-beta-1,3-GalNAc sequence of glycoproteins and glycolipids forming an alpha-2,6-linkage. Produces branched type disialyl structures by transfer of a sialyl group onto a GalNAc residue inside the backbone core chains. ST6GalNAcIII prefers glycolipids to glycoproteins, predominantly catalyzing the biosynthesis of ganglioside GD1alpha from GM1b. GD1alpha is a critical molecule in the communication and interaction between neuronal cells and their supportive cells, particularly in brain tissues, and functions as an adhesion molecule in the process of metastasis. Sialylation of glycoproteins or glycosphingolipids is very important in tumor development, neuronal development, nerve repair, immunological processes and regulation of hormone sensitivity. This chain is Alpha-N-acetylgalactosaminide alpha-2,6-sialyltransferase 3 (St6galnac3), found in Rattus norvegicus (Rat).